The following is a 130-amino-acid chain: Phosphoribosyl-AMP cyclohydrolase (130 aa).

Asp-78 provides a ligand contact to Mg(2+). Cys-79 is a Zn(2+) binding site. Residues Asp-80 and Asp-82 each coordinate Mg(2+). Residues Cys-96 and Cys-103 each contribute to the Zn(2+) site.

The protein belongs to the PRA-CH family. Homodimer. The cofactor is Mg(2+). Zn(2+) serves as cofactor.

Its subcellular location is the cytoplasm. It catalyses the reaction 1-(5-phospho-beta-D-ribosyl)-5'-AMP + H2O = 1-(5-phospho-beta-D-ribosyl)-5-[(5-phospho-beta-D-ribosylamino)methylideneamino]imidazole-4-carboxamide. The protein operates within amino-acid biosynthesis; L-histidine biosynthesis; L-histidine from 5-phospho-alpha-D-ribose 1-diphosphate: step 3/9. Functionally, catalyzes the hydrolysis of the adenine ring of phosphoribosyl-AMP. The protein is Phosphoribosyl-AMP cyclohydrolase of Methylobacillus flagellatus (strain ATCC 51484 / DSM 6875 / VKM B-1610 / KT).